The sequence spans 275 residues: tRNA (guanine-N(7)-)-methyltransferase (275 aa).

A disordered region spans residues 1–73 (MRHHGRMHAR…GGQQDTWERL (73 aa)). A compositionally biased stretch (basic residues) spans 46-59 (AHRHRRVTSFRSRR). Glu-107, Glu-132, Asp-159, and Asp-182 together coordinate S-adenosyl-L-methionine. Asp-182 is an active-site residue. Substrate is bound by residues Lys-186, Asp-218, and 254–257 (TKYE).

The protein belongs to the class I-like SAM-binding methyltransferase superfamily. TrmB family.

It carries out the reaction guanosine(46) in tRNA + S-adenosyl-L-methionine = N(7)-methylguanosine(46) in tRNA + S-adenosyl-L-homocysteine. Its pathway is tRNA modification; N(7)-methylguanine-tRNA biosynthesis. Its function is as follows. Catalyzes the formation of N(7)-methylguanine at position 46 (m7G46) in tRNA. The chain is tRNA (guanine-N(7)-)-methyltransferase from Mycobacterium sp. (strain KMS).